Reading from the N-terminus, the 233-residue chain is Uracil-DNA glycosylase (233 aa).

D70 functions as the Proton acceptor in the catalytic mechanism.

Belongs to the uracil-DNA glycosylase (UDG) superfamily. UNG family.

The protein resides in the cytoplasm. It catalyses the reaction Hydrolyzes single-stranded DNA or mismatched double-stranded DNA and polynucleotides, releasing free uracil.. Functionally, excises uracil residues from the DNA which can arise as a result of misincorporation of dUMP residues by DNA polymerase or due to deamination of cytosine. The polypeptide is Uracil-DNA glycosylase (Helicobacter pylori (strain P12)).